The sequence spans 1405 residues: Tonsoku-like protein (1405 aa).

TPR repeat units follow at residues 23-56 (AVSC…YASM), 63-96 (AKAK…AKRL), 163-196 (ARCY…SKTH), 203-237 (HLCY…AKRF), 245-278 (CETL…NTPD), 314-347 (KGLY…AELN), and 355-388 (VPIY…NQDA). One copy of the LRR 1 repeat lies at 153-181 (ISKLEQLDMQARCYLNIGVVKEHMEAFQE). One copy of the LRR 2 repeat lies at 439-465 (MVRLRRLMLKHNMQVLVENLEADATAK). The disordered stretch occupies residues 465 to 535 (KGIDLDQEES…RGNRTLVIKK (71 aa)). Acidic residues predominate over residues 469-483 (LDQEESVGDDEEESD). ANK repeat units follow at residues 538-567 (KGET…TVNV), 571-600 (AGWL…ASAI), and 609-638 (DGIT…DATV). Disordered stretches follow at residues 695-753 (FNAK…KEYR), 806-827 (KRIN…DTAL), and 841-880 (TPEN…KKHQ). A phosphoserine mark is found at S707 and S709. Residues 813 to 822 (LSRRTSKENF) are compositionally biased toward basic and acidic residues. Positions 841–850 (TPENEYSQRQ) are enriched in polar residues. Low complexity predominate over residues 859 to 874 (SRSSSMSSNHSSSATS). Phosphoserine occurs at positions 893, 895, 899, and 902. 6 LRR repeats span residues 1085–1108 (QARL…QLAK), 1113–1137 (LLQL…LLCG), 1143–1166 (LELL…ILSK), 1186–1211 (LTEL…QLTQ), 1287–1311 (AKQL…YILD), and 1333–1357 (LQKL…VFSM).

Belongs to the Tonsoku family.

The protein localises to the nucleus. It localises to the nucleoplasm. Its subcellular location is the chromosome. In terms of biological role, histone reader involved in homologous recombination-mediated repair of double-strand breaks (DSBs) at stalled or collapsed replication forks. Specifically recognizes and binds histone H3.1. The sequence is that of Tonsoku-like protein from Drosophila melanogaster (Fruit fly).